The primary structure comprises 109 residues: Nucleoid-associated protein Sputw3181_1707 (109 aa).

This sequence belongs to the YbaB/EbfC family. As to quaternary structure, homodimer.

The protein resides in the cytoplasm. The protein localises to the nucleoid. Its function is as follows. Binds to DNA and alters its conformation. May be involved in regulation of gene expression, nucleoid organization and DNA protection. This Shewanella sp. (strain W3-18-1) protein is Nucleoid-associated protein Sputw3181_1707.